The primary structure comprises 218 residues: Non-structural protein NS3 (218 aa).

The protein belongs to the orbivirus NS3 family.

Its function is as follows. May play a role in the release of virions from infected cells. In Camelus dromedarius (Dromedary), this protein is Non-structural protein NS3 (Segment-10).